Reading from the N-terminus, the 318-residue chain is Probable tyrosine phosphatase protein N1 (318 aa).

The 267-residue stretch at 26–292 (IVRLEHHQVI…LILQPGYYVL (267 aa)) folds into the Tyrosine-protein phosphatase domain. The active-site Phosphocysteine intermediate is the cysteine 233.

Belongs to the protein-tyrosine phosphatase family.

It catalyses the reaction O-phospho-L-tyrosyl-[protein] + H2O = L-tyrosyl-[protein] + phosphate. In Microplitis demolitor bracovirus (isolate Webb) (MdBV), this protein is Probable tyrosine phosphatase protein N1 (N3).